Consider the following 194-residue polypeptide: Cysteine and glycine-rich protein 2 (194 aa).

Residues 10 to 61 (CGACGRTVYHAEEVQCDGRSFHRCCFLCMVCRKNLDSTTVAIHDAEVYCKSC) enclose the LIM zinc-binding 1 domain. Positions 64-69 (KKYGPK) match the Nuclear localization signal motif. One can recognise an LIM zinc-binding 2 domain in the interval 120-171 (CSRCGDSVYAAEKVIGAGKPWHKNCFRCAKCGKSLESTTLTEKEGEIYCKGC).

Its subcellular location is the nucleus. Functionally, totally down-regulated in transformed cells. May therefore take part in the control of cell growth and differentiation. The chain is Cysteine and glycine-rich protein 2 (CSRP2) from Gallus gallus (Chicken).